A 165-amino-acid polypeptide reads, in one-letter code: Small ribosomal subunit protein uS5 (165 aa).

The S5 DRBM domain maps to 10–73 (LKEKVVFINR…EDAKKHLVEV (64 aa)).

It belongs to the universal ribosomal protein uS5 family. Part of the 30S ribosomal subunit. Contacts proteins S4 and S8.

With S4 and S12 plays an important role in translational accuracy. Its function is as follows. Located at the back of the 30S subunit body where it stabilizes the conformation of the head with respect to the body. In Clostridium novyi (strain NT), this protein is Small ribosomal subunit protein uS5.